The following is a 143-amino-acid chain: Nucleoside diphosphate kinase (143 aa).

Residues lysine 11, phenylalanine 59, arginine 87, threonine 93, arginine 104, and asparagine 114 each coordinate ATP. Catalysis depends on histidine 117, which acts as the Pros-phosphohistidine intermediate.

This sequence belongs to the NDK family. In terms of assembly, homotetramer. Mg(2+) is required as a cofactor.

The protein resides in the cytoplasm. The catalysed reaction is a 2'-deoxyribonucleoside 5'-diphosphate + ATP = a 2'-deoxyribonucleoside 5'-triphosphate + ADP. It catalyses the reaction a ribonucleoside 5'-diphosphate + ATP = a ribonucleoside 5'-triphosphate + ADP. Its function is as follows. Major role in the synthesis of nucleoside triphosphates other than ATP. The ATP gamma phosphate is transferred to the NDP beta phosphate via a ping-pong mechanism, using a phosphorylated active-site intermediate. The sequence is that of Nucleoside diphosphate kinase from Clostridium perfringens (strain SM101 / Type A).